The chain runs to 407 residues: 1-deoxy-D-xylulose 5-phosphate reductoisomerase (407 aa).

Threonine 25, glycine 26, serine 27, isoleucine 28, asparagine 53, and asparagine 136 together coordinate NADPH. Lysine 137 is a 1-deoxy-D-xylulose 5-phosphate binding site. Position 138 (glutamate 138) interacts with NADPH. Aspartate 162 provides a ligand contact to Mn(2+). Positions 163, 164, 188, and 211 each coordinate 1-deoxy-D-xylulose 5-phosphate. Position 164 (glutamate 164) interacts with Mn(2+). Glycine 217 contacts NADPH. The 1-deoxy-D-xylulose 5-phosphate site is built by serine 224, asparagine 229, lysine 230, and glutamate 233. Residue glutamate 233 participates in Mn(2+) binding.

Belongs to the DXR family. It depends on Mg(2+) as a cofactor. Mn(2+) is required as a cofactor.

It carries out the reaction 2-C-methyl-D-erythritol 4-phosphate + NADP(+) = 1-deoxy-D-xylulose 5-phosphate + NADPH + H(+). Its pathway is isoprenoid biosynthesis; isopentenyl diphosphate biosynthesis via DXP pathway; isopentenyl diphosphate from 1-deoxy-D-xylulose 5-phosphate: step 1/6. In terms of biological role, catalyzes the NADPH-dependent rearrangement and reduction of 1-deoxy-D-xylulose-5-phosphate (DXP) to 2-C-methyl-D-erythritol 4-phosphate (MEP). This chain is 1-deoxy-D-xylulose 5-phosphate reductoisomerase, found in Rhodopseudomonas palustris (strain BisB5).